Consider the following 123-residue polypeptide: uncharacterized protein (123 aa).

The helical transmembrane segment at 14-34 threads the bilayer; that stretch reads VVLKITAVVCSVFSIRVLILA.

The protein resides in the membrane. This is an uncharacterized protein from Saccharomyces cerevisiae (strain ATCC 204508 / S288c) (Baker's yeast).